The primary structure comprises 164 residues: Cytochrome c-type biogenesis protein CcmE (164 aa).

Topologically, residues 1–8 (MNPRRKSR) are cytoplasmic. The helical; Signal-anchor for type II membrane protein transmembrane segment at 9 to 29 (LYLAMVVLIGISLTTTLVLYA) threads the bilayer. Topologically, residues 30–164 (LRSNIDLFYT…RGTNTTGNAL (135 aa)) are periplasmic. 2 residues coordinate heme: His-130 and Tyr-134. The disordered stretch occupies residues 140–164 (EEAMKENHSRPAAAYRGTNTTGNAL).

This sequence belongs to the CcmE/CycJ family.

It localises to the cell inner membrane. Heme chaperone required for the biogenesis of c-type cytochromes. Transiently binds heme delivered by CcmC and transfers the heme to apo-cytochromes in a process facilitated by CcmF and CcmH. In Yersinia pseudotuberculosis serotype O:3 (strain YPIII), this protein is Cytochrome c-type biogenesis protein CcmE.